Here is a 542-residue protein sequence, read N- to C-terminus: Putative ankyrin repeat protein FPV115 (542 aa).

ANK repeat units follow at residues 33 to 62 (FRNLPLHYAIYSRRKDIVETLLKSGYDPNS), 157 to 186 (DGLLPLYHAAAAGNTEMVELLLSYGAKTNL), 218 to 247 (NDINNILKTIQLYNADMLLFLIEIGLDINT), 251 to 281 (KGKTALHYACNSINCIETVKEIMKYGADINV), 285 to 314 (EGLTPLHSACKYGDLKLSKLLIEYGADVKV), 316 to 345 (TTSTVLNLAVESGNVELVKFLIEKNPEFIT), 347 to 375 (DYLSLSLAIRCKDINIVLLLLDAGMDVNS), and 378 to 407 (CISTPLHLGVILGNSNIVKLLLDHGANINA).

The chain is Putative ankyrin repeat protein FPV115 from Fowlpox virus (strain NVSL) (FPV).